Here is a 186-residue protein sequence, read N- to C-terminus: Ribosome-recycling factor (186 aa).

Belongs to the RRF family.

Its subcellular location is the cytoplasm. In terms of biological role, responsible for the release of ribosomes from messenger RNA at the termination of protein biosynthesis. May increase the efficiency of translation by recycling ribosomes from one round of translation to another. This is Ribosome-recycling factor from Rhodopseudomonas palustris (strain ATCC BAA-98 / CGA009).